The sequence spans 520 residues: Poly(A)-specific ribonuclease PNLDC1 (520 aa).

Mg(2+)-binding residues include D17, E19, D260, and D354. A helical transmembrane segment spans residues 497-513 (CLLQVCGIVTAWALLAF).

This sequence belongs to the CAF1 family. It depends on Mg(2+) as a cofactor.

The protein localises to the endoplasmic reticulum membrane. It catalyses the reaction Exonucleolytic cleavage of poly(A) to 5'-AMP.. In terms of biological role, 3'-exoribonuclease that has a preference for poly(A) tails of mRNAs, thereby efficiently degrading poly(A) tails. Exonucleolytic degradation of the poly(A) tail is often the first step in the decay of eukaryotic mRNAs and is also used to silence certain maternal mRNAs translationally during oocyte maturation and early embryonic development. May act as a regulator of multipotency in embryonic stem cells. Is a critical factor for proper spermatogenesis, involved in pre-piRNAs processing to generate mature piRNAs. The polypeptide is Poly(A)-specific ribonuclease PNLDC1 (Pongo abelii (Sumatran orangutan)).